Consider the following 201-residue polypeptide: Mediator of RNA polymerase II transcription subunit 22 (201 aa).

Positions 93–123 (SVNESINQRNQQLRTLREECDKKLIALRDDI) form a coiled coil. A disordered region spans residues 182–201 (SQIHTPPHLNGHGAGMTEHT).

Belongs to the Mediator complex subunit 22 family. Component of the Mediator complex.

Its subcellular location is the nucleus. In terms of biological role, component of the Mediator complex, a coactivator involved in the regulated transcription of nearly all RNA polymerase II-dependent genes. Mediator functions as a bridge to convey information from gene-specific regulatory proteins to the basal RNA polymerase II transcription machinery. Mediator is recruited to promoters by direct interactions with regulatory proteins and serves as a scaffold for the assembly of a functional preinitiation complex with RNA polymerase II and the general transcription factors. The polypeptide is Mediator of RNA polymerase II transcription subunit 22 (med22) (Xenopus laevis (African clawed frog)).